An 81-amino-acid polypeptide reads, in one-letter code: Putative sulfur carrier protein VNG_5061C/VNG_5236C/VNG_6059C/VNG_6467C (81 aa).

Cysteine 18 acts as the Cysteine persulfide intermediate in catalysis.

It belongs to the sulfur carrier protein TusA family.

The protein is Putative sulfur carrier protein VNG_5061C/VNG_5236C/VNG_6059C/VNG_6467C of Halobacterium salinarum (strain ATCC 700922 / JCM 11081 / NRC-1) (Halobacterium halobium).